Consider the following 116-residue polypeptide: Ribosome-binding factor A (116 aa).

It belongs to the RbfA family. Monomer. Binds 30S ribosomal subunits, but not 50S ribosomal subunits or 70S ribosomes.

The protein localises to the cytoplasm. Its function is as follows. One of several proteins that assist in the late maturation steps of the functional core of the 30S ribosomal subunit. Associates with free 30S ribosomal subunits (but not with 30S subunits that are part of 70S ribosomes or polysomes). Required for efficient processing of 16S rRNA. May interact with the 5'-terminal helix region of 16S rRNA. The chain is Ribosome-binding factor A from Staphylococcus epidermidis (strain ATCC 35984 / DSM 28319 / BCRC 17069 / CCUG 31568 / BM 3577 / RP62A).